The sequence spans 267 residues: Tryptophan synthase alpha chain (267 aa).

Residues Glu-47 and Asp-58 each act as proton acceptor in the active site.

The protein belongs to the TrpA family. As to quaternary structure, tetramer of two alpha and two beta chains.

The enzyme catalyses (1S,2R)-1-C-(indol-3-yl)glycerol 3-phosphate + L-serine = D-glyceraldehyde 3-phosphate + L-tryptophan + H2O. Its pathway is amino-acid biosynthesis; L-tryptophan biosynthesis; L-tryptophan from chorismate: step 5/5. The alpha subunit is responsible for the aldol cleavage of indoleglycerol phosphate to indole and glyceraldehyde 3-phosphate. In Prosthecochloris aestuarii (strain DSM 271 / SK 413), this protein is Tryptophan synthase alpha chain.